A 532-amino-acid chain; its full sequence is 2,3-bisphosphoglycerate-independent phosphoglycerate mutase (532 aa).

Residues Asp15 and Ser65 each coordinate Mn(2+). Ser65 (phosphoserine intermediate) is an active-site residue. Residues His126, 156 to 157 (RD), Arg188, Arg194, 258 to 261 (RPDR), and Lys331 contribute to the substrate site. Residues Asp398, His402, Asp439, His440, and His457 each coordinate Mn(2+).

The protein belongs to the BPG-independent phosphoglycerate mutase family. As to quaternary structure, monomer. Requires Mn(2+) as cofactor.

The catalysed reaction is (2R)-2-phosphoglycerate = (2R)-3-phosphoglycerate. It functions in the pathway carbohydrate degradation; glycolysis; pyruvate from D-glyceraldehyde 3-phosphate: step 3/5. Catalyzes the interconversion of 2-phosphoglycerate and 3-phosphoglycerate. In Synechococcus elongatus (strain ATCC 33912 / PCC 7942 / FACHB-805) (Anacystis nidulans R2), this protein is 2,3-bisphosphoglycerate-independent phosphoglycerate mutase.